The following is a 549-amino-acid chain: Glucose-6-phosphate isomerase (549 aa).

N6-acetyllysine occurs at positions 80, 228, and 234. Glu355 (proton donor) is an active-site residue. Catalysis depends on residues His386 and Lys514.

This sequence belongs to the GPI family.

It is found in the cytoplasm. It catalyses the reaction alpha-D-glucose 6-phosphate = beta-D-fructose 6-phosphate. It functions in the pathway carbohydrate biosynthesis; gluconeogenesis. It participates in carbohydrate degradation; glycolysis; D-glyceraldehyde 3-phosphate and glycerone phosphate from D-glucose: step 2/4. Functionally, catalyzes the reversible isomerization of glucose-6-phosphate to fructose-6-phosphate. The protein is Glucose-6-phosphate isomerase of Escherichia coli O17:K52:H18 (strain UMN026 / ExPEC).